A 124-amino-acid polypeptide reads, in one-letter code: Small ribosomal subunit protein uS12 (124 aa).

The residue at position 89 (aspartate 89) is a 3-methylthioaspartic acid. A disordered region spans residues 101-124 (TLDTSGVKDRRQSRSKYGAKAPKE).

It belongs to the universal ribosomal protein uS12 family. Part of the 30S ribosomal subunit. Contacts proteins S8 and S17. May interact with IF1 in the 30S initiation complex.

Its function is as follows. With S4 and S5 plays an important role in translational accuracy. Functionally, interacts with and stabilizes bases of the 16S rRNA that are involved in tRNA selection in the A site and with the mRNA backbone. Located at the interface of the 30S and 50S subunits, it traverses the body of the 30S subunit contacting proteins on the other side and probably holding the rRNA structure together. The combined cluster of proteins S8, S12 and S17 appears to hold together the shoulder and platform of the 30S subunit. The chain is Small ribosomal subunit protein uS12 from Synechococcus sp. (strain CC9902).